A 407-amino-acid chain; its full sequence is Imidazolonepropionase (407 aa).

Residues H74 and H76 each coordinate Fe(3+). Zn(2+)-binding residues include H74 and H76. Residues R83, Y146, and H179 each coordinate 4-imidazolone-5-propanoate. Y146 is an N-formimidoyl-L-glutamate binding site. H244 lines the Fe(3+) pocket. Residue H244 coordinates Zn(2+). Residue Q247 participates in 4-imidazolone-5-propanoate binding. D319 serves as a coordination point for Fe(3+). Position 319 (D319) interacts with Zn(2+). The N-formimidoyl-L-glutamate site is built by N321 and G323. T324 lines the 4-imidazolone-5-propanoate pocket.

Belongs to the metallo-dependent hydrolases superfamily. HutI family. Zn(2+) is required as a cofactor. Fe(3+) serves as cofactor.

Its subcellular location is the cytoplasm. It carries out the reaction 4-imidazolone-5-propanoate + H2O = N-formimidoyl-L-glutamate. Its pathway is amino-acid degradation; L-histidine degradation into L-glutamate; N-formimidoyl-L-glutamate from L-histidine: step 3/3. Functionally, catalyzes the hydrolytic cleavage of the carbon-nitrogen bond in imidazolone-5-propanoate to yield N-formimidoyl-L-glutamate. It is the third step in the universal histidine degradation pathway. This chain is Imidazolonepropionase, found in Salmonella agona (strain SL483).